The sequence spans 518 residues: Protein nucleotidyltransferase YdiU (518 aa).

Residues 1–10 (MTHLQFDNRL) are compositionally biased toward basic and acidic residues. The disordered stretch occupies residues 1–23 (MTHLQFDNRLRAQLPGDPEQGPR). ATP-binding residues include G100, G102, R103, K123, D135, G136, R193, and R200. The Proton acceptor role is filled by D270. The Mg(2+) site is built by N271 and D280. An ATP-binding site is contributed by D280.

This sequence belongs to the SELO family. The cofactor is Mg(2+). Requires Mn(2+) as cofactor.

It catalyses the reaction L-seryl-[protein] + ATP = 3-O-(5'-adenylyl)-L-seryl-[protein] + diphosphate. It carries out the reaction L-threonyl-[protein] + ATP = 3-O-(5'-adenylyl)-L-threonyl-[protein] + diphosphate. The enzyme catalyses L-tyrosyl-[protein] + ATP = O-(5'-adenylyl)-L-tyrosyl-[protein] + diphosphate. The catalysed reaction is L-histidyl-[protein] + UTP = N(tele)-(5'-uridylyl)-L-histidyl-[protein] + diphosphate. It catalyses the reaction L-seryl-[protein] + UTP = O-(5'-uridylyl)-L-seryl-[protein] + diphosphate. It carries out the reaction L-tyrosyl-[protein] + UTP = O-(5'-uridylyl)-L-tyrosyl-[protein] + diphosphate. Nucleotidyltransferase involved in the post-translational modification of proteins. It can catalyze the addition of adenosine monophosphate (AMP) or uridine monophosphate (UMP) to a protein, resulting in modifications known as AMPylation and UMPylation. This Xanthomonas campestris pv. campestris (strain B100) protein is Protein nucleotidyltransferase YdiU.